We begin with the raw amino-acid sequence, 327 residues long: Movement protein (327 aa).

Residues 252-311 (DLTREEREKAAQLEMLRKTREVHTQRSAEEMKRRQAELAKDTQRKLAEEAKAVTEKRKNM) adopt a coiled-coil conformation. Disordered regions lie at residues 271–294 (REVH…KDTQ) and 307–327 (KRKN…FDSV). The span at 313–327 (GVNSSNIKFGNFDSV) shows a compositional bias: polar residues.

It is found in the host cell wall. The protein localises to the host cytoplasm. Functionally, transports viral genome to neighboring plant cells directly through plasmosdesmata, without any budding. The movement protein allows efficient cell to cell propagation, by bypassing the host cell wall barrier. The polypeptide is Movement protein (Hordeum vulgare (Barley)).